The primary structure comprises 555 residues: Dihydroxy-acid dehydratase (555 aa).

D78 contacts Mg(2+). Residue C119 coordinates [2Fe-2S] cluster. The Mg(2+) site is built by D120 and K121. K121 is modified (N6-carboxylysine). C191 serves as a coordination point for [2Fe-2S] cluster. A Mg(2+)-binding site is contributed by E444. Catalysis depends on S470, which acts as the Proton acceptor.

This sequence belongs to the IlvD/Edd family. As to quaternary structure, homodimer. [2Fe-2S] cluster is required as a cofactor. The cofactor is Mg(2+).

It catalyses the reaction (2R)-2,3-dihydroxy-3-methylbutanoate = 3-methyl-2-oxobutanoate + H2O. The catalysed reaction is (2R,3R)-2,3-dihydroxy-3-methylpentanoate = (S)-3-methyl-2-oxopentanoate + H2O. The protein operates within amino-acid biosynthesis; L-isoleucine biosynthesis; L-isoleucine from 2-oxobutanoate: step 3/4. It participates in amino-acid biosynthesis; L-valine biosynthesis; L-valine from pyruvate: step 3/4. Functionally, functions in the biosynthesis of branched-chain amino acids. Catalyzes the dehydration of (2R,3R)-2,3-dihydroxy-3-methylpentanoate (2,3-dihydroxy-3-methylvalerate) into 2-oxo-3-methylpentanoate (2-oxo-3-methylvalerate) and of (2R)-2,3-dihydroxy-3-methylbutanoate (2,3-dihydroxyisovalerate) into 2-oxo-3-methylbutanoate (2-oxoisovalerate), the penultimate precursor to L-isoleucine and L-valine, respectively. This is Dihydroxy-acid dehydratase from Maridesulfovibrio salexigens (strain ATCC 14822 / DSM 2638 / NCIMB 8403 / VKM B-1763) (Desulfovibrio salexigens).